We begin with the raw amino-acid sequence, 967 residues long: MAFANFRRILRLSTFEKRKSREYEHVRRDLDPNDVWEILGELGDGAFGKVYKAKNKETGALAAAKVIETKSEEELEDYIVEIEILATCDHPYIVKLLGAYYYDGKLWIMIEFCPGGAVDAIMLELDRGLTEPQIQVVCRQMLEALNFLHGKRIIHRDLKAGNVLMTLEGDIRLADFGVSAKNLKTLQKRDSFIGTPYWMAPEVVLCETMKDAPYDYKADIWSLGITLIEMAQIEPPHHELNPMRVLLKIAKSDPPTLLTPSKWSTEFRDFLKIALDKNPETRPSAAQLLQHPFVSTVTSNKALRELVAEAKAEVMEEIEDGKEDGSEKDAVSAVPPPVNHTQDSSANGTQPSLNSDKLLQDSSTPLPPSQPQEPVNGPCNQPSGDGSPQNTSPADEVSKNDNGLKVPVPLRKSRPLSVDARIQVTEEKQITDQAENPSSAASKPPKVNQSRPNSSALETLGVETLANGGLELPGSVTPNHSKRASDCSNLSTSESMDYGTSLSADLSLNKETGSLSLKGSKLHNKTLKRTRRFVVDGVEVSITTSKIISEDEKKDEEMRFLRRQELRELRLLQKEEHRNQTQLSTKHELQLEQMHRRFEQEINAKKKFYDVELENLERQQKQQVEKMEQDHSVRRREEAKRIRLEQDRDYARFQEQLKQMKKEVKRSIEKALRKQRQESMRMGQDSHTQKKQRLDRDFVAKQKEDLELAMKKLTAENRREICDKERDCLNKKQELLRDREAALWEMEEHQLQERHQLVKQQLKDQYFLQRHDLLRKHEKEREQMQRYNQRMMEQLKVRQQQEKARLPKIQRSDGKTRMAMYKKSLHINGAGSASEQREKVKQFSQQEEKRQKAERLQQQQKHENQMRDMVAQCESNMNELQQLQNEKCHLLVEHETQKLKALDESHNQSLKEWRDKLRPRKKALEEDLNQKKREQEMFFRLSEEAETRPTTPNRASKFFPYSSGDAS.

2 positions are modified to phosphoserine: Ser13 and Ser20. Positions Trp36–Val294 constitute a Protein kinase domain. ATP-binding positions include Leu42–Val50 and Lys65. The active-site Proton acceptor is Asp157. Residues Asp175–Gly224 are activation segment. A Phosphothreonine; by autocatalysis modification is found at Thr185. Residue Ser191 is modified to Phosphoserine; by autocatalysis. 2 disordered regions span residues Glu317–Ser454 and Gly468–Tyr498. 3 stretches are compositionally biased toward polar residues: residues Asn339–Thr364, Pro378–Pro393, and Thr431–Ser454. Ser438, Ser450, Ser454, and Ser485 each carry phosphoserine. Residues Asp486–Tyr498 are compositionally biased toward polar residues. Phosphoserine is present on residues Ser514 and Ser549. Disordered stretches follow at residues Ile827 to Met866 and Leu902 to Ser967. Basic and acidic residues-rich tracts occupy residues Glu835 to Met866 and Leu902 to Thr947. Thr951 is subject to Phosphothreonine.

The protein belongs to the protein kinase superfamily. STE Ser/Thr protein kinase family. STE20 subfamily. Homodimer; homodimerization is required for activation segment autophosphorylation. In terms of processing, autophosphorylates following homodimerization, leading to activation of the protein.

The protein localises to the cell membrane. It catalyses the reaction L-seryl-[protein] + ATP = O-phospho-L-seryl-[protein] + ADP + H(+). It carries out the reaction L-threonyl-[protein] + ATP = O-phospho-L-threonyl-[protein] + ADP + H(+). With respect to regulation, inhibited by the pyrrole-indolinone inhibitor SU11274 (K00593): intercalates between the ATP-binding Lys-65 and alpha-C glutamate (Glu-81), resulting in a partial disordering of the lysine side chain. Also specifically inhibited by erlotinib. Slightly inhibited by gefitinib. Its function is as follows. Serine/threonine-protein kinase involved in regulation of lymphocyte migration. Phosphorylates MSN, and possibly PLK1. Involved in regulation of lymphocyte migration by mediating phosphorylation of ERM proteins such as MSN. Acts as a negative regulator of MAP3K1/MEKK1. May also act as a cell cycle regulator by acting as a polo kinase kinase: mediates phosphorylation of PLK1 in vitro; however such data require additional evidences in vivo. This Rattus norvegicus (Rat) protein is Serine/threonine-protein kinase 10 (Stk10).